Here is a 150-residue protein sequence, read N- to C-terminus: Ribosome maturation factor RimP (150 aa).

Belongs to the RimP family.

The protein localises to the cytoplasm. Required for maturation of 30S ribosomal subunits. In Klebsiella pneumoniae (strain 342), this protein is Ribosome maturation factor RimP.